The following is a 534-amino-acid chain: Pentatricopeptide repeat-containing protein At1g07590, mitochondrial (534 aa).

Residues 1-20 constitute a mitochondrion transit peptide; sequence MRSIIALMRQREYFVQAIRR. PPR repeat units follow at residues 165 to 199, 200 to 234, 235 to 269, 270 to 300, 305 to 335, 339 to 369, 374 to 408, 409 to 443, and 451 to 485; these read NELLYNNLVIACLDQGVIRLALEYMKKMRELGYRT, SHLVYNRLIIRNSAPGRRKLIAKDLALMKADKATP, HVSTYHILMKLEANEHNIDGVLKAFDGMKKAGVEP, NEVSYCILAMAHAVARLYTVAEAYTEEIEKS, NWSTLDILMILYGRLGKEKELARTWNVIRGF, RSKSYLLATEAFARVGNLDRAEELWLEMKNV, ETEQFNSLLSVYCKDGLIEKAIGVFREMTGNGFKP, NSITYRHLALGCAKAKLMKEALKNIEMGLNLKTSK, and WLETTLSIIECFAEKGDVENSEKLFEEVKNAKYNR.

It belongs to the PPR family. P subfamily.

The protein localises to the mitochondrion. The chain is Pentatricopeptide repeat-containing protein At1g07590, mitochondrial from Arabidopsis thaliana (Mouse-ear cress).